The sequence spans 649 residues: Beta-galactosidase-1-like protein 3 (649 aa).

The active-site Proton donor is the glutamate 203. The Nucleophile role is filled by glutamate 277.

The protein belongs to the glycosyl hydrolase 35 family.

This chain is Beta-galactosidase-1-like protein 3 (Glb1l3), found in Mus musculus (Mouse).